The sequence spans 93 residues: UPF0298 protein GWCH70_0997 (93 aa).

The protein belongs to the UPF0298 family.

It localises to the cytoplasm. The chain is UPF0298 protein GWCH70_0997 from Geobacillus sp. (strain WCH70).